Consider the following 376-residue polypeptide: MAGPRYPVSVQGAALVQIKRLQTFAFSVRWSDGSDTFVRRSWDEFRQLKKTLKETFPVEAGLLRRSDRVLPKLLGQASLDAPLLGRVGRTSRGLARLQLLETYSRRLLATAERVARSPTITGFFAPQPLDLEPALPPGSRVILPTPEEQPLSRAAGRLSIHSLEAQSLRCLQPFCTQDTRDRPFQAQAQESLDVLLRHPSGWWLVENEDRQTAWFPAPYLEEAAPGQGREGGPSLGSSGPQFCASRAYESSRADELSVPAGARVRVLETSDRGWWLCRYGDRAGLLPAVLLRPEGLGALLSGTGFRGGDDPAGEARGFPEPSQATAPPPTVPTRPSPGAIQSRCCTVTRRALERRPRRQGRPRGCVDSVPHPTTEQ.

Residues 1-131 (MAGPRYPVSV…GFFAPQPLDL (131 aa)) form the PX domain. SH3 domains follow at residues 163–225 (LEAQ…EAAP) and 237–296 (SSGP…PEGL). Positions 302 to 376 (GTGFRGGDDP…DSVPHPTTEQ (75 aa)) are disordered. Over residues 326–335 (APPPTVPTRP) the composition is skewed to pro residues. Positions 328–337 (PPTVPTRPSP) are proline-rich region; mediates mutually exclusive interactions with itself and NOXA1.

Interacts with NOX1, NOXA1, CYBA/p22phox and NCF2/p67phox. Interacts with SH3PXD2A and SH3PXD2B. Expressed in testis, small and large intestines, liver, kidney and pancreas. Isoform 3 is mainly expressed in colon. Isoform 1 is preferentially expressed in testis.

Its subcellular location is the cell membrane. Its function is as follows. Constitutively potentiates the superoxide-generating activity of NOX1 and NOX3 and is required for the biogenesis of otoconia/otolith, which are crystalline structures of the inner ear involved in the perception of gravity. Isoform 3 is more potent than isoform 1 in activating NOX3. Together with NOXA1, may also substitute to NCF1/p47phox and NCF2/p67phox in supporting the phagocyte NOX2/gp91phox superoxide-generating activity. This Homo sapiens (Human) protein is NADPH oxidase organizer 1 (NOXO1).